We begin with the raw amino-acid sequence, 472 residues long: 7-dimethylallyltryptophan synthase hasE (472 aa).

Residue Glu138 participates in L-tryptophan binding. Dimethylallyl diphosphate-binding residues include Arg154, Lys239, Tyr241, Lys313, Tyr315, Tyr393, Tyr460, and Tyr464.

It belongs to the tryptophan dimethylallyltransferase family. As to quaternary structure, homodimer.

The catalysed reaction is L-tryptophan + dimethylallyl diphosphate = 7-(3-methylbut-2-enyl)-L-tryptophan + diphosphate. It catalyses the reaction an N-terminal L-tryptophanyl-L-alpha-aminoacyl-[peptide] + H2O = an N-terminal L-alpha-aminoacyl-[peptide] + L-tryptophan. It functions in the pathway secondary metabolite biosynthesis. 7-dimethylallyltryptophan synthase; part of the gene cluster that mediates the biosynthesis of hexadehydro-astechrome (HAS), a tryptophan-derived iron(III)-complex that acts as a virulence factor in infected mice. Catalyzes the prenylation of L-tryptophan at the C-7 position of the indole moiety. The enzyme is specific for dimethylallyl diphosphate (DMAPP) as prenyl donor. Also accepts D-tryptophan, typtophan-derivatives with modifications at the side chain or the indole ring, and linear and cyclic dipeptides such as H-L-Trp-L-Gly-OH or cyclo-L-Trp-L-Gly as substrates, however with lower efficiency. Also has tryptophan aminopeptidase activity towards linear peptides with a tryptophanyl moiety at the N-terminus. Dipeptides are better substrates than peptides with 3 or more amino acids. Enzymatic rate constants however are much higher for the prenyltransferase activity than for the aminopeptidase activity. Within the hexadehydro-astechrome biosyntetic pathway, hasE catalyzes the prenylation of the hasD-tethered tryptophan or the resulting tethered Trp-Ala dipeptid. The HAS biosynthesis begins with the synthesis of a tethered Trp-Ala dipeptide by the NRPS hasD. The 7-dimethylallyltryptophan synthase hasE then catalyzes the prenylation of the hasD-tethered tryptophan or the resulting tethered Trp-Ala dipeptide at the C-7 position of the indole moiety. HAS biosynthesis continues via tethered intermediates with the succesive actions of the cytochrome P450 monooxygenase hasH, the O-methyltransferase hasC, and the FAD-linked oxidoreductase hasG. The resulting O-methylated diketopiperazine is then released from hasD. Finally, three O-methylated diketopiperazine molecules assemble in a trimeric complex with Fe(III) to produce hexadehydro-astechrome. This Aspergillus fumigatus (strain CBS 144.89 / FGSC A1163 / CEA10) (Neosartorya fumigata) protein is 7-dimethylallyltryptophan synthase hasE.